Reading from the N-terminus, the 432-residue chain is Pachytene checkpoint protein 2 homolog (432 aa).

Residue M1 is modified to N-acetylmethionine. 179 to 186 (GPPGTGKT) is a binding site for ATP.

Belongs to the AAA ATPase family. PCH2 subfamily. As to quaternary structure, specifically interacts with the ligand binding domain of the thyroid receptor (TR). This interaction does not require the presence of thyroid hormone for its interaction. Interacts with proteasome subunit PSMA8; to participate in meiosis progression during spermatogenesis. Widely expressed, including in testis.

Plays a key role in chromosome recombination and chromosome structure development during meiosis. Required at early steps in meiotic recombination that leads to non-crossovers pathways. Also needed for efficient completion of homologous synapsis by influencing crossover distribution along the chromosomes affecting both crossovers and non-crossovers pathways. Also required for development of higher-order chromosome structures and is needed for synaptonemal-complex formation. In males, required for efficient synapsis of the sex chromosomes and for sex body formation. Promotes early steps of the DNA double-strand breaks (DSBs) repair process upstream of the assembly of RAD51 complexes. Required for depletion of HORMAD1 and HORMAD2 from synapsed chromosomes. Plays a role in mitotic spindle assembly checkpoint (SAC) activation. The polypeptide is Pachytene checkpoint protein 2 homolog (Trip13) (Mus musculus (Mouse)).